A 250-amino-acid chain; its full sequence is UPF0736 protein RBAM_011410 (250 aa).

This sequence belongs to the UPF0736 family.

The protein is UPF0736 protein RBAM_011410 of Bacillus velezensis (strain DSM 23117 / BGSC 10A6 / LMG 26770 / FZB42) (Bacillus amyloliquefaciens subsp. plantarum).